A 418-amino-acid polypeptide reads, in one-letter code: Gamma-glutamyl phosphate reductase (418 aa).

The protein belongs to the gamma-glutamyl phosphate reductase family.

Its subcellular location is the cytoplasm. The catalysed reaction is L-glutamate 5-semialdehyde + phosphate + NADP(+) = L-glutamyl 5-phosphate + NADPH + H(+). It participates in amino-acid biosynthesis; L-proline biosynthesis; L-glutamate 5-semialdehyde from L-glutamate: step 2/2. Functionally, catalyzes the NADPH-dependent reduction of L-glutamate 5-phosphate into L-glutamate 5-semialdehyde and phosphate. The product spontaneously undergoes cyclization to form 1-pyrroline-5-carboxylate. The protein is Gamma-glutamyl phosphate reductase of Thermodesulfovibrio yellowstonii (strain ATCC 51303 / DSM 11347 / YP87).